A 223-amino-acid chain; its full sequence is Ribose-5-phosphate isomerase A (223 aa).

Residues Thr32 to Thr35, Asp85 to Asp88, and Lys98 to Gly101 each bind substrate. The active-site Proton acceptor is Glu107. Position 125 (Lys125) interacts with substrate.

Belongs to the ribose 5-phosphate isomerase family. Homodimer.

The catalysed reaction is aldehydo-D-ribose 5-phosphate = D-ribulose 5-phosphate. The protein operates within carbohydrate degradation; pentose phosphate pathway; D-ribose 5-phosphate from D-ribulose 5-phosphate (non-oxidative stage): step 1/1. Its function is as follows. Catalyzes the reversible conversion of ribose-5-phosphate to ribulose 5-phosphate. This is Ribose-5-phosphate isomerase A from Pseudomonas savastanoi pv. phaseolicola (strain 1448A / Race 6) (Pseudomonas syringae pv. phaseolicola (strain 1448A / Race 6)).